The sequence spans 117 residues: Large ribosomal subunit protein bL20 (117 aa).

It belongs to the bacterial ribosomal protein bL20 family.

Functionally, binds directly to 23S ribosomal RNA and is necessary for the in vitro assembly process of the 50S ribosomal subunit. It is not involved in the protein synthesizing functions of that subunit. The sequence is that of Large ribosomal subunit protein bL20 from Ruminiclostridium cellulolyticum (strain ATCC 35319 / DSM 5812 / JCM 6584 / H10) (Clostridium cellulolyticum).